The chain runs to 663 residues: Transketolase 2 (663 aa).

Residue His-25 participates in substrate binding. Thiamine diphosphate is bound by residues His-65 and 113 to 115 (GPL). Asp-154 serves as a coordination point for Mg(2+). Gly-155 and Asn-184 together coordinate thiamine diphosphate. Asn-184 and Ile-186 together coordinate Mg(2+). Substrate-binding residues include His-259, Arg-356, and Ser-383. Thiamine diphosphate is bound at residue His-259. Residue Glu-410 is the Proton donor of the active site. Phe-436 serves as a coordination point for thiamine diphosphate. The substrate site is built by His-460, Asp-468, and Arg-519.

This sequence belongs to the transketolase family. As to quaternary structure, homodimer. Requires Mg(2+) as cofactor. Ca(2+) is required as a cofactor. The cofactor is Mn(2+). Co(2+) serves as cofactor. It depends on thiamine diphosphate as a cofactor.

It carries out the reaction D-sedoheptulose 7-phosphate + D-glyceraldehyde 3-phosphate = aldehydo-D-ribose 5-phosphate + D-xylulose 5-phosphate. Its function is as follows. Catalyzes the transfer of a two-carbon ketol group from a ketose donor to an aldose acceptor, via a covalent intermediate with the cofactor thiamine pyrophosphate. The chain is Transketolase 2 (tkt2) from Vibrio vulnificus (strain CMCP6).